The primary structure comprises 3351 residues: MARMKYNIALIGILASVLLTIAVNAENACNLGCPKSDNGLLKYIPGNYYDYSFDSILTIGASSDVPNDSDDTSLKVSGSAKIFAKGNCGYTLQLSSVKVTNTKESVEKKILNSIQKPVQFTLVSGILEPQICSDSSDLDYSLNIKRAVVSLLQSGIEAEHEVDVFGMCPTHTSTSKVGNANIITKARNLNSCSHREQINSGLVSGKVNEKAGITSSLLLQANYIKESRIVNHLIENVQLTETYKFIGNTKRNSDISAKVVTILKLKNPSGTKANSPGTGSTVRSLIFQRPETYTSKNINALKTILSDLVDSTGDYVKKETAKKFVEFIRLLRQSDSETLLELAAFPHPNKVLARKVYLDGLFRTSTAESARVILKQLSKFDEKEKLLAILSLNIVKSVDKETLNQAASQLLPNAPKELYIAVGNLVAKYCLKNYCQGPEIDAISKKFSDGLKHCKPNTKREEERIVYILKGLGNAKSLSGNTVAALSECASTGRSNRIRVAALHAFSKVKCEETLQSKSLELLKNRNEDSELRIEAYLSAISCPNAEVANQISEIVNSETVNQVGGFISSNLKAIRDSTDVSRDQQKYHLANIRVTKTFPVDYRRYSFNNEVSYKLESLGVGASTDYQIIYSQHGFLPRSSRINVTTEFFGTNYNVFEASVRQENVEDVLEYYLGPKGLVNKDFDEIVKLIEVGNNGVAAGGRARRSIVDDVSKISKKYKMYGVKNVQDLNLDVSLKLFGSELAFLSLGDNIPSSLDDIINYFSTSFEKAKQELSSFEKQFSSHHLFLDTDLAYPTSIGVPLELVAQGFAATKVDLAVSLDINAILEQNWQKAKYRLKFVPSVDINANVQIGFNAQVLSTGLRVVSSAHSATGSDITVAVISDGEGFNVDLELPREKLELINFNVDTELYVAEQDKQKAIALKGNKKNKNSQPSEICFNQLELVGLNICIKSSTSLSEVQAGNGNVAERGLSVSEKFHLSRPFNFAVYLTTERKFTFKGIHTQEAFSQKWKLDYSTPGSKVSHDTTVVYELGNKPKTFSRLSFDNSQCHFAVEGGINNDKNELVVYGQYEQDKEIKKSKIGFSKNGNEYKPLIEIQDNNGISNSINGYHADGKIVVKKNSNNIERYNFENFQVSNSNNAHVAVNGWSDVGTNSLTSELRISLDHQTFLIKENLKLENGLYEAGFFINDEHSPENIYGSSIHLTIADQSYALKTNGKAAAWSIGSDGSFNFQKLADSNSARAGSLVENVEIQYKNKQVGGIKIMSNFDVNKMDVDVEISREQKIGSIIVKYESNQRHAQDYSLEASAKINKHSIDVISKCDFNGNVYVVDNSLVTSWGTLLSAKGEIGQRYSAQDININIQGNVQISGKDKVTQWILKVIGTPDKTNSDFRISRDTSELIKLTSESQHPQDKISFAKLNLIVKNQLTAKGEFRVAKNGKGDFTASIDTLKTEPKHKLEIESKFHIQSPKYDIDASLTLDGKRKVHLKSENTIEKLKFSTKNIGEANDKIIAFEANGSLKGELRGNGEIQGTFIFNAPDGRVIDGSINRKISTNAKSGLSQGNIDAQLSDTPFGSNKKRSISLIGKLDRLNTKTKEFSANSNLVYTAFNGEKSEISYQIKQQPNGDAKNIDFSLKAYGNPLPQPFEIAFALGDYSAQHAVVSITSKYGEIFSVSANGNYNNNQALEYGLQANIEIPKSTLKSLEINSHGKVLKSLIGNENAAYNVEFFLDSKTSLGQYARVNTVWNGTANDGSYDFEAQTNNMESPLKFNGKYHRKQTGNIKDGDLTGKQTYVLNAQYGAQYVKMDASLGYGAEKVDIAYVIDSSFDSVKDIKVNIRTFKPLDDSTYVVTALFKQTDKSYGLDTTFYHSAHKKGVDIRLDLLKEKPIIISSIAELLGDRKGKVLFEILNLADLDIKINSEASYVSIDEFYIIVNWSSKKLKLDGYELEARAQSKNIKIQLKNENGIIFSGTATYALKKELNKTIIDGQGKVQYQGKALSGNFKLTRQHFDFGTDREVGFSYTFMGNLGSKNGLGTLKITNKEFNTKFSVCEEKRQCTNLIVQSIVSIDEQKLDAVEHTTLIIVDLRDFGYPYEFELKSQNTRQGLKYQYHLDSFIITGNNFKYQFTANVQPTSSTIKLALPKRQILFETTQKIPADGSLFGRYEQTASFFIDKLQKPDDVARFSAIVDVTGTERVAFNANGKLKFEHPTIRPLSISGQLNGDVNQQIASAEVIFDIFRLPEQKVVGNSELRNSRSQNGFNIAYITTVKSAGLQFQYQINSNAAVDIEAHEYNIGLELNNGEIDVKAISFLNKEKFEISLSESNKHIIYIVGDFSKQNHYAKLNTKVQILDKNPIEITSEVQPNSAKIILKRQDFIDGTAEVKLGKEFKVDVIGSGKQLFNGRVALDATNFLQTNYFINEDHLNGFWHIVESEINKDSEYISENIKERLKKSRQVTDKIVKLAKEAGPDFSKLQGKLLDYKNDIVQELEADQSIAPIIDGIRTLFKKIAGIVDDINKAISEILEKAQKSIVDIYDKLQALWKDSLLKAWEDFIITVQKLISTLKTEFIKICTQSFKDLLSALEKYGPALKNYGKAIGEIVKPINDAAQEVIKIVVNAAEGVTHEFKQYVASLPSFESIRNEFNDKVKVLKLFEKATELTNSLFDQINILPQTPETSEFLQKLHDYLIAKLKQEHIDNEKYIEELGQLLIKAVRSIWVSIRSTYPGSSDHVIDFQSWIGSLTHSFDSLAVLPSILSFRSSILNCLLNENWDVVFNKKLLYSWIFFNDFELRGHVVDGKHIFTFDGLNFAYPGNCKYILAQDSVDNNFTIIGQLTNGKLKSITLIDREGSYFEVADNLALKLNGNLVEYPQHLSGLHAWRRFYTIHLYSEYGVGIVCTSDLKVCHININGFYTSKTRGLLGNGNAEPYDDFLLIDGTLAENSAALGNDYGVGKCTAIEFDNNQFKSSKRQEMCSELFGIESTLAFNFITLDSRPYRKACDIALAKVAEKEKEATACTFALAYGSAVKQINKWVLLPPRCIKCAGPAGQHDFGDEFTVKLPNNKVDVVFVVDINVTPGVLSNLIAPAINDIRESLRSRGFSDVQVGVIVFEETKRYPALLTSDGGKINYKGNVADVKLAGIKSFCDNCVEQIITEKRILDIYNSLKEIVKGIAPQADEKAFQLALDYPFRAGAAKSIIGVRSDSLEYKNWWKFVRAQLTGSITKFDGALIHLIAPVKGLSLEGVLSEKLIGFNSRLVATVDGKDSKKRTKLQFDNDMGIDFVLNNGGWVFATQNFEKLKASDQKKMLNQITSSLADTLFKTEIVSDCRCLPIHGLHGQHKCVIKSSTFVANKKAKSA.

The signal sequence occupies residues 1–25; that stretch reads MARMKYNIALIGILASVLLTIAVNA. Positions 43 to 641 constitute a Vitellogenin domain; that stretch reads YIPGNYYDYS…SQHGFLPRSS (599 aa). N-linked (GlcNAc...) asparagine glycans are attached at residues Asn-67, Asn-644, Asn-1514, Asn-1744, Asn-1932, Asn-1979, and Asn-2822. Residues 2786–2952 form the VWFD domain; sequence LRGHVVDGKH…DYGVGKCTAI (167 aa).

As to quaternary structure, interacts with Nrx-1 (via cytoplasmic domain); the interaction supports apolpp/ApoLI protein stability. May be modified covalently by lipidation. In terms of processing, cleaved into 2 chains by furin protease. However, prevention of cleavage does not impair its function. During stage 12, it is highly present throughout the yolk sac. By late stage 14, it localizes in the lateral fat body cells. Starting at stage 14, it localizes to the apodemes. Component of hemolymph clots (at protein level). Expressed in the amniosera. Expressed in rhabdomere of photoreceptor cells in retina (at protein level). As to expression, expressed in rhabdomere of photoreceptor cells in retina (at protein level). In terms of tissue distribution, expressed in simper cells as well as interphotoreceptor matrix (at protein level).

It localises to the secreted. The protein localises to the cell projection. Its subcellular location is the rhabdomere. Its function is as follows. Constitutes the major component of lipophorin, which mediates transport for various types of lipids in hemolymph. Acts by forming lipoprotein particles that bind lipoproteins and lipids. Also involved in the transport of hydrophobic ligands like juvenile hormones, pheromone hydrocarbons and carotenoids. Required for morphogens wingless (wg) and hedgehog (hh) function, probably by acting as vehicles for the movement of wg and hh, explaining how covalently lipidated wg and hh can spread over long distances. May also be involved in transport and/or metabolism of heme. Involved in yolk granule formation. May be a component of yolk incorporated into yolk granules via yl/yolkless-mediated endocytosis and the endolysosomal pathway. The sequence is that of Apolipophorins from Drosophila melanogaster (Fruit fly).